The following is a 471-amino-acid chain: Putative ABC transporter ATP-binding protein STK_11360 (471 aa).

ABC transporter domains follow at residues 4 to 241 and 255 to 470; these read LEIK…LEPL and VILE…VIKD. Residues 37-44 and 286-293 each bind ATP; these read GKSGSGKS and GDNGSGKS.

The protein belongs to the ABC transporter superfamily.

It is found in the cell membrane. Its function is as follows. Probably part of an ABC transporter complex. Responsible for energy coupling to the transport system. This Sulfurisphaera tokodaii (strain DSM 16993 / JCM 10545 / NBRC 100140 / 7) (Sulfolobus tokodaii) protein is Putative ABC transporter ATP-binding protein STK_11360.